The primary structure comprises 777 residues: Cullin-3 (777 aa).

The interval 568 to 596 (YPPPKASMSNEENGPGPSSSGESMKERKP) is disordered. Low complexity predominate over residues 576-589 (SNEENGPGPSSSGE). The 63-residue stretch at 707 to 769 (DRKLEVEAAI…REYLARDEHD (63 aa)) folds into the Cullin neddylation domain. Residue lysine 721 forms a Glycyl lysine isopeptide (Lys-Gly) (interchain with G-Cter in NEDD8) linkage.

This sequence belongs to the cullin family. As to quaternary structure, probable component of multiple cullin-RING-based BCB (BTB-CUL3-BTB) E3 ubiquitin-protein ligase complexes formed by cul-3, rbx-1 and a variable BTB domain-containing protein acting as both, adapter to cullin and substrate recognition component. Interacts with bath-15, bath-40, bath-41, bath-42, C17F4.8, tag-303, D2045.8, F57C2.1, ZC239.15 and B0281.5. Interacts with mel-26 (via BTB domain). Interacts with dcn-1. In terms of processing, neddylated. Deneddylated via its interaction with the COP9 signalosome (CSN) complex.

The protein localises to the cytoplasm. It localises to the nucleus. It functions in the pathway protein modification; protein ubiquitination. Its function is as follows. Probable core component of multiple cullin-RING-based BCB (BTB-CUL3-BTB) E3 ubiquitin-protein ligase complexes which mediate the ubiquitination and subsequent proteasomal degradation of target proteins. Probably acts as a scaffold protein which may contribute to catalysis through positioning of the substrate and the ubiquitin-conjugating enzyme. Required to target mei-3/katanin for degradation at the meiosis to mitosis transition via its neddylation and deneddylation. Functions in ubiquitin-mediated degradation of CKIs to target cki-1 for degradation. Regulates microtubule stability in the early embryo. In body wall muscles, involved in the organization of myosin thick filaments, likely by regulating the degradation of microtubule severing protein mei-1 downstream of unc-89. Together with spop-1, may promote the ubiquitination and proteasomal degradation of target bromodomain-containing proteins such as bet-1. The chain is Cullin-3 from Caenorhabditis elegans.